A 114-amino-acid chain; its full sequence is Ribonuclease P protein component (114 aa).

This sequence belongs to the RnpA family. In terms of assembly, consists of a catalytic RNA component (M1 or rnpB) and a protein subunit.

The catalysed reaction is Endonucleolytic cleavage of RNA, removing 5'-extranucleotides from tRNA precursor.. RNaseP catalyzes the removal of the 5'-leader sequence from pre-tRNA to produce the mature 5'-terminus. It can also cleave other RNA substrates such as 4.5S RNA. The protein component plays an auxiliary but essential role in vivo by binding to the 5'-leader sequence and broadening the substrate specificity of the ribozyme. This Clostridioides difficile (strain 630) (Peptoclostridium difficile) protein is Ribonuclease P protein component.